Consider the following 30-residue polypeptide: Conotoxin CcTx (30 aa).

Position 2 is a 4-hydroxyproline (proline 2). A glycan (O-linked (HexNAc...) serine) is linked at serine 7. 3 disulfide bridges follow: cysteine 12–cysteine 21, cysteine 13–cysteine 26, and cysteine 24–cysteine 30. 4-hydroxyproline is present on residues proline 17 and proline 22.

O-glycosylated at Ser-7 by a core type 9 glycan, containing both D- and L-galactose units (alpha-L-Galp-(1-&gt;4)-alpha-D- GlcpNAc-(1-&gt;6)-[alpha-L-Galp-(1-&gt;2)-bets-D-Galp-(1-&gt;3)-]alpha-D-GalpNAc-(1-&gt;O)). Expressed by the venom duct.

It is found in the secreted. In terms of biological role, may specifically activate neuronal voltage-gated sodium channels (Nav) at the resting membrane potential. Causes a marked contraction and extension of the caudal and dorsal fins in fish and noticeable spontaneous contractions of isolated frog neuromuscular preparations. This chain is Conotoxin CcTx, found in Conus consors (Singed cone).